Reading from the N-terminus, the 263-residue chain is Mannose-specific lectin 2 (263 aa).

A signal peptide spans 1–24 (MAKSLVLSSLLLALLLAAPLASLA). 2 Bulb-type lectin domains span residues 26-136 (NNVL…APNR) and 150-260 (RNVL…SSAS). 2 disulfides stabilise this stretch: Cys-54–Cys-76 and Cys-178–Cys-203.

As to quaternary structure, heterotetramer of 2 domain 1 and 2 domain 2 chains arranged as a dimer of domain 1/domain 2 heterodimers.

Functionally, mannose-specific lectin. Has weak agglutinating activity towards trypsin-treated erythrocytes from rabbit but not from human. The sequence is that of Mannose-specific lectin 2 from Crocus vernus (Dutch crocus).